A 574-amino-acid chain; its full sequence is Optineurin (574 aa).

The disordered stretch occupies residues 1–33 (MSHQPLSCLTEKGDSPTETTGNGPPTLAHPNLD). A coiled-coil region spans residues 38–170 (HELLQQMREL…VSELQLKLNS (133 aa)). The interval 58–209 (MKLNNQAMKG…GPIRTDSIDT (152 aa)) is interaction with Rab8. The short motif at 176–181 (DSFVEI) is the LIR element. S177 is subject to Phosphoserine; by TBK1. Phosphoserine is present on S198. The stretch at 233-496 (CLREGNQKVE…ALQLAVLLKD (264 aa)) forms a coiled coil. A compositionally biased stretch (basic and acidic residues) spans 262-286 (AKDRSETETQTEEHKEQEKEEEKSP). The interval 262–292 (AKDRSETETQTEEHKEQEKEEEKSPETVGSE) is disordered. A Phosphoserine modification is found at S336. The interval 405–574 (KRRESEKVDK…LLIHVTDCII (170 aa)) is interaction with HD. Residues 406–515 (RRESEKVDKV…RQSLMEMQSR (110 aa)) form an interaction with MYO6 region. The UBAN signature appears at 468-473 (DFHAER). S521 is subject to Phosphoserine. A CCHC NOA-type zinc finger spans residues 544–574 (QQNIPIHSCPKCGEVLPDIDTLLIHVTDCII). Residues C552, C555, H568, and C572 each contribute to the Zn(2+) site.

Self-associates. Interacts with HD. Interacts with GTF3A. Interacts with MYO6. Interacts (via UBAN) with ubiquitinated TFRC. Interacts with GTP-bound Rab8 (RAB8A and/or RAB8B). Interacts with TBC1D17. Interacts with TBK1. Interacts with TRAF3. Binds to linear ubiquitin chains. Interacts with LC3 family members MAP1LC3A, MAP1LC3B, GABARAP, GABARAPL1 and GABARAPL2; OPTN phosphorylation increases the association (at least with MAP1LC3B). Interacts with RAB12; the interaction may be indirect. Interacts with TBK1; this interaction leads to the Golgi localization of TBK1 and its subsequent activation. Interacts with palmitoyltransferase ZDHHC17/HIP14; the interaction does not lead to palmitoylation of OPTN. Interacts with CYLD. Interacts with TOM1; the interaction is indirect and is mediated by MYO6, which acts as a bridge between TOM1 and OPTN. Interacts with USP12; the interaction is independent of USP12 deubiquitinase activity and may be involved in regulation of autophagic flux. Phosphorylated by TBK1, leading to restrict bacterial proliferation in case of infection. As to expression, present in aqueous humor of the eye (at protein level). Expressed in trabecular meshwork and astrocytes.

The protein resides in the cytoplasm. It localises to the perinuclear region. It is found in the golgi apparatus. Its subcellular location is the trans-Golgi network. The protein localises to the cytoplasmic vesicle. The protein resides in the autophagosome. It localises to the recycling endosome. Its function is as follows. Plays an important role in the maintenance of the Golgi complex, in membrane trafficking, in exocytosis, through its interaction with myosin VI and Rab8. Links myosin VI to the Golgi complex and plays an important role in Golgi ribbon formation. Negatively regulates the induction of IFNB in response to RNA virus infection. Plays a neuroprotective role in the eye and optic nerve. Probably part of the TNF-alpha signaling pathway that can shift the equilibrium toward induction of cell death. May act by regulating membrane trafficking and cellular morphogenesis via a complex that contains Rab8 and huntingtin (HD). Mediates the interaction of Rab8 with the probable GTPase-activating protein TBC1D17 during Rab8-mediated endocytic trafficking, such as that of transferrin receptor (TFRC/TfR); regulates Rab8 recruitment to tubules emanating from the endocytic recycling compartment. Autophagy receptor that interacts directly with both the cargo to become degraded and an autophagy modifier of the MAP1 LC3 family; targets ubiquitin-coated bacteria (xenophagy) and appears to function in the same pathway as SQSTM1 and CALCOCO2/NDP52. This chain is Optineurin (OPTN), found in Sus scrofa (Pig).